A 420-amino-acid polypeptide reads, in one-letter code: Type II methyltransferase M.NmeDI (420 aa).

The segment at 1–23 (MMSLKIQPAVPKKSDKPSATNRD) is disordered. The region spanning 56–411 (TLIFSFFSGA…MTLKSYLENH (356 aa)) is the SAM-dependent MTase C5-type domain. Cys-148 is an active-site residue.

This sequence belongs to the class I-like SAM-binding methyltransferase superfamily. C5-methyltransferase family.

It carries out the reaction a 2'-deoxycytidine in DNA + S-adenosyl-L-methionine = a 5-methyl-2'-deoxycytidine in DNA + S-adenosyl-L-homocysteine + H(+). Its function is as follows. A methylase that recognizes the double-stranded sequence 5'-RCCGGB-3', methylates C-2 on both strands, and protects the DNA from cleavage by the NmeDI endonuclease. The chain is Type II methyltransferase M.NmeDI (nmeDIMP) from Neisseria meningitidis serogroup C.